The chain runs to 373 residues: tRNA-specific 2-thiouridylase MnmA (373 aa).

Residues glycine 12–serine 19 and methionine 38 each bind ATP. The interaction with target base in tRNA stretch occupies residues asparagine 98–aspartate 100. Cysteine 103 acts as the Nucleophile in catalysis. A disulfide bond links cysteine 103 and cysteine 200. Glycine 127 provides a ligand contact to ATP. Residues lysine 150–glutamine 152 form an interaction with tRNA region. Catalysis depends on cysteine 200, which acts as the Cysteine persulfide intermediate. The segment at arginine 312 to tyrosine 313 is interaction with tRNA.

It belongs to the MnmA/TRMU family.

The protein localises to the cytoplasm. The catalysed reaction is S-sulfanyl-L-cysteinyl-[protein] + uridine(34) in tRNA + AH2 + ATP = 2-thiouridine(34) in tRNA + L-cysteinyl-[protein] + A + AMP + diphosphate + H(+). Functionally, catalyzes the 2-thiolation of uridine at the wobble position (U34) of tRNA, leading to the formation of s(2)U34. The polypeptide is tRNA-specific 2-thiouridylase MnmA (Streptococcus pyogenes serotype M18 (strain MGAS8232)).